Consider the following 590-residue polypeptide: MNKQLKEKLALLPDQPGCYLMKDRQQTVIYVGKAKVLKNRVRSYFTGSHDAKTQRLVTEIEDFEYIVTSSNLEALILEMNLIKKHDPKYNVMLKDDKTYPFIKLTHERHPRLIVTRNVKKDKGRYFGPYPNVQAARETKKLLDRLYPLRKCSKLPDRVCLYYHLGQCLAPCVKDISEETNRELVESITRFLRGGYNEVKKELEEKMHEAAENLEFERAKELRDQIAHIESTMEKQKMTMNDLVDRDVFAYAYDKGWMCVQVFFIRQGKLIERDVSMFPLYQEADEEFLTFIGQFYSKNNHFLPKEILVPDSIDQSMIEQLLETNVHQPKKGPKKELLMLAHKNAKIALKEKFSLIERDEERSIGAVQKLGEALNIYTPHRIEAFDNSNIQGTNPVSAMIVFIDGKPYKKEYRKYKIKTVTGPDDYGSMREVVRRRYTRVLRENLPLPDLIIIDGGKGQINAARDVIENELGLDIPIAGLAKDEKHRTSNLLIGDPLEVAYLERNSQEFYLLQRIQDEVHRFAISFHRQIRGKSAFQSVLDDIPGIGEKRKKMLLKHFGSVKKMKEASLEDIKKAGVPAAAAQLLYDKLQK.

Positions 14 to 91 (DQPGCYLMKD…IKKHDPKYNV (78 aa)) constitute a GIY-YIG domain. Residues 196 to 231 (NEVKKELEEKMHEAAENLEFERAKELRDQIAHIEST) form the UVR domain.

This sequence belongs to the UvrC family. In terms of assembly, interacts with UvrB in an incision complex.

The protein localises to the cytoplasm. The UvrABC repair system catalyzes the recognition and processing of DNA lesions. UvrC both incises the 5' and 3' sides of the lesion. The N-terminal half is responsible for the 3' incision and the C-terminal half is responsible for the 5' incision. The protein is UvrABC system protein C of Bacillus subtilis (strain 168).